The sequence spans 246 residues: DNA polymerase sliding clamp (246 aa).

Belongs to the PCNA family. Homotrimer. The subunits circularize to form a toroid; DNA passes through its center. Replication factor C (RFC) is required to load the toroid on the DNA.

In terms of biological role, sliding clamp subunit that acts as a moving platform for DNA processing. Responsible for tethering the catalytic subunit of DNA polymerase and other proteins to DNA during high-speed replication. The polypeptide is DNA polymerase sliding clamp (Thermoplasma volcanium (strain ATCC 51530 / DSM 4299 / JCM 9571 / NBRC 15438 / GSS1)).